A 135-amino-acid chain; its full sequence is Lymphocyte antigen 6 complex locus protein G6d (135 aa).

Positions M1–G19 are cleaved as a signal peptide. A UPAR/Ly6 domain is found at T22–L121. Intrachain disulfides connect C24–C48, C27–C35, C42–C76, C82–C101, and C102–C107. An O-linked (GalNAc...) threonine glycan is attached at T68. A lipid anchor (GPI-anchor amidated asparagine) is attached at N108. Residues S109–L135 constitute a propeptide, removed in mature form.

In terms of assembly, homodimer. In terms of processing, O-glycosylated. Expressed in embryonic tissue and adult lung, kidney, brain, liver and spleen.

It is found in the cell membrane. The protein resides in the cell projection. The protein localises to the filopodium. This chain is Lymphocyte antigen 6 complex locus protein G6d (Ly6g6d), found in Mus musculus (Mouse).